A 178-amino-acid polypeptide reads, in one-letter code: Cytochrome b6-f complex iron-sulfur subunit (178 aa).

Residues 20–42 (LLTFGSVTGVALGALYPVVNYFI) form a helical membrane-spanning segment. Residues 71–161 (THPAGDRSLV…VSVENDNVFV (91 aa)) enclose the Rieske domain. 4 residues coordinate [2Fe-2S] cluster: C107, H109, C125, and H128. Cysteines 112 and 127 form a disulfide.

It belongs to the Rieske iron-sulfur protein family. In terms of assembly, the 4 large subunits of the cytochrome b6-f complex are cytochrome b6, subunit IV (17 kDa polypeptide, PetD), cytochrome f and the Rieske protein, while the 4 small subunits are PetG, PetL, PetM and PetN. The complex functions as a dimer. The cofactor is [2Fe-2S] cluster.

Its subcellular location is the cellular thylakoid membrane. It catalyses the reaction 2 oxidized [plastocyanin] + a plastoquinol + 2 H(+)(in) = 2 reduced [plastocyanin] + a plastoquinone + 4 H(+)(out). Its function is as follows. Component of the cytochrome b6-f complex, which mediates electron transfer between photosystem II (PSII) and photosystem I (PSI), cyclic electron flow around PSI, and state transitions. This is Cytochrome b6-f complex iron-sulfur subunit from Synechococcus sp. (strain WH7803).